Here is a 556-residue protein sequence, read N- to C-terminus: 2-succinyl-5-enolpyruvyl-6-hydroxy-3-cyclohexene-1-carboxylate synthase (556 aa).

It belongs to the TPP enzyme family. MenD subfamily. In terms of assembly, homodimer. Mg(2+) serves as cofactor. It depends on Mn(2+) as a cofactor. Thiamine diphosphate is required as a cofactor.

The enzyme catalyses isochorismate + 2-oxoglutarate + H(+) = 5-enolpyruvoyl-6-hydroxy-2-succinyl-cyclohex-3-ene-1-carboxylate + CO2. Its pathway is quinol/quinone metabolism; 1,4-dihydroxy-2-naphthoate biosynthesis; 1,4-dihydroxy-2-naphthoate from chorismate: step 2/7. It functions in the pathway quinol/quinone metabolism; menaquinone biosynthesis. Functionally, catalyzes the thiamine diphosphate-dependent decarboxylation of 2-oxoglutarate and the subsequent addition of the resulting succinic semialdehyde-thiamine pyrophosphate anion to isochorismate to yield 2-succinyl-5-enolpyruvyl-6-hydroxy-3-cyclohexene-1-carboxylate (SEPHCHC). This Escherichia coli O127:H6 (strain E2348/69 / EPEC) protein is 2-succinyl-5-enolpyruvyl-6-hydroxy-3-cyclohexene-1-carboxylate synthase.